The chain runs to 178 residues: CDP-archaeol synthase (178 aa).

5 consecutive transmembrane segments (helical) span residues 7-27 (LFVSFWFILPAYTANAMACIF), 56-76 (FFGVFFGIVTAIIQYLVSNLG), 91-111 (VIIGFLLSFGALFGDMFGSFL), 125-145 (VLDQITFIVFALIFVSYYYLV), and 149-169 (ISITLLILSPVVHILSNIIAY).

It belongs to the CDP-archaeol synthase family. Requires Mg(2+) as cofactor.

The protein localises to the cell membrane. It carries out the reaction 2,3-bis-O-(geranylgeranyl)-sn-glycerol 1-phosphate + CTP + H(+) = CDP-2,3-bis-O-(geranylgeranyl)-sn-glycerol + diphosphate. It functions in the pathway membrane lipid metabolism; glycerophospholipid metabolism. Its function is as follows. Catalyzes the formation of CDP-2,3-bis-(O-geranylgeranyl)-sn-glycerol (CDP-archaeol) from 2,3-bis-(O-geranylgeranyl)-sn-glycerol 1-phosphate (DGGGP) and CTP. This reaction is the third ether-bond-formation step in the biosynthesis of archaeal membrane lipids. This chain is CDP-archaeol synthase, found in Methanococcus vannielii (strain ATCC 35089 / DSM 1224 / JCM 13029 / OCM 148 / SB).